Consider the following 1218-residue polypeptide: MEENSKKDHRALLNQGEEDELEVFGYRDHNVRKAFCLVASVLTCGGLLLVFYWRPQWRVWANCIPCPLQEADTVLLRTTDEFQRYMRKKVFCLYLSTLKFPVSKKWEESLVADRHSVINQALIKPELKLRCMEVQKIRYVWNDLEKRFQKVGLLEDSNSCSDIHQTFGLGLTSEEQEVRRLVCGPNAIEVEIQPIWKLLVKQVLNPFYVFQAFTLTLWLSQGYIEYSVAIIILTVISIVLSVYDLRQQSVKLHNLVEDHNKVQVTIIVKDKGLEELESRLLVPGDILILPGKFSLPCDAVLIDGSCVVNEGMLTGESIPVTKTPLPQMENTMPWKCHSLEDYRKHVLFCGTEVIQVKPSGQGPVRAVVLQTGYNTAKGDLVRSILYPRPLNFKLYSDAFKFIVFLACLGVMGFFYALGVYMYHGVPPKDTVTMALILLTVTVPPVLPAALTIGNVYAQKRLKKKKIFCISPQRINMCGQINLVCFDKTGTLTEDGLDLWGTVPTADNCFQEAHSFASGQAVPWSPLCAAMASCHSLILLNGTIQGDPLDLKMFEGTAWKMEDCIVDSCKFGTSVSNIIKPGPKASKSPVEAIITLCQFPFSSSLQRMSVIAQLAGENHFHVYMKGAPEMVARFCRSETVPKNFPQELRSYTVQGFRVIALAHKTLKMGNLSEVEHLAREKVESELTFLGLLIMENRLKKETKLVLKELSEARIRTVMITGDNLQTAITVAKNSEMIPPGSQVIIVEADEPEEFVPASVTWQLVENQETGPGKKEIYMHTGNSSTPRGEGGSCYHFAMSGKSYQVIFQHFNSLLPKILVNGTVFARMSPGQKSSLIEEFQKLNYYVGMCGDGANDCGALKAAHAGISLSEQEASVASPFTSKTTNIQCVPHLIREGRAALVSSFGVFKYLTMYGIIQFISALLLYWQLQLFGNYQYLMQDVAITLMVCLTMSSTHAYPKLAPYRPAGQLLSPPLLLSIFLNSCFSCIVQISAFLYVKQQPWYCEVYQYSECFLANQSNFSTNVSLERNWTGNATLIPGSILSFETTTLWPITTINYITVAFIFSKGKPFRKPIYTNYIFSFLLLAALGLTIFILFSDFQVIYRGMELIPTITSWRVLILVVALTQFCVAFFVEDSILQNHELWLLIKREFGFYSKSQYRTWQKKLAEDSTWPPINRTDYSGDGKNGFYINGGYESHEQIPKRKLKLGGQPTEQHFWARL.

4 helical membrane-spanning segments follow: residues lysine 33–tryptophan 53, glycine 222–valine 242, phenylalanine 401–methionine 421, and methionine 433–glycine 453. The active-site 4-aspartylphosphate intermediate is the aspartate 486. Residues asparagine 540, asparagine 669, and asparagine 819 are each glycosylated (N-linked (GlcNAc...) asparagine). Aspartate 850 and aspartate 854 together coordinate Mg(2+). Transmembrane regions (helical) follow at residues phenylalanine 903–leucine 923, valine 940–tyrosine 956, leucine 973–leucine 993, phenylalanine 1042–phenylalanine 1062, isoleucine 1077–phenylalanine 1097, and valine 1115–isoleucine 1135.

It belongs to the cation transport ATPase (P-type) (TC 3.A.3) family. Type V subfamily.

The protein resides in the membrane. The catalysed reaction is ATP + H2O = ADP + phosphate + H(+). The sequence is that of Probable cation-transporting ATPase 13A5 (ATP13A5) from Homo sapiens (Human).